Reading from the N-terminus, the 228-residue chain is MTQDELKALVAQAAADYVLANVPEGAVLGVGTGSTANLFIDAMAPHKARFAGAVSSSEASTRRLQGHGFAVLDLNEVDTIPVYVDGADEIDDTGAMIKGGGGALTREKIVASVAGRFVCIADGSKLVDVLGAFPLPVEVVPMARAAVARQLAALGGQPRLRMTKEGQIYQTDNGNVILDVSGLRIGEPKTLEAQINDIPGVVTVGLFAKRGADVLLLGTEAGVQRRDF.

Substrate contacts are provided by residues 32-35 (TGST), 85-88 (DGAD), and 98-101 (KGGG). E107 acts as the Proton acceptor in catalysis. K125 contacts substrate.

Belongs to the ribose 5-phosphate isomerase family. Homodimer.

The enzyme catalyses aldehydo-D-ribose 5-phosphate = D-ribulose 5-phosphate. Its pathway is carbohydrate degradation; pentose phosphate pathway; D-ribose 5-phosphate from D-ribulose 5-phosphate (non-oxidative stage): step 1/1. Catalyzes the reversible conversion of ribose-5-phosphate to ribulose 5-phosphate. In Ralstonia nicotianae (strain ATCC BAA-1114 / GMI1000) (Ralstonia solanacearum), this protein is Ribose-5-phosphate isomerase A.